A 355-amino-acid polypeptide reads, in one-letter code: S-adenosylmethionine:tRNA ribosyltransferase-isomerase (355 aa).

The protein belongs to the QueA family. As to quaternary structure, monomer.

The protein localises to the cytoplasm. The enzyme catalyses 7-aminomethyl-7-carbaguanosine(34) in tRNA + S-adenosyl-L-methionine = epoxyqueuosine(34) in tRNA + adenine + L-methionine + 2 H(+). Its pathway is tRNA modification; tRNA-queuosine biosynthesis. Transfers and isomerizes the ribose moiety from AdoMet to the 7-aminomethyl group of 7-deazaguanine (preQ1-tRNA) to give epoxyqueuosine (oQ-tRNA). The sequence is that of S-adenosylmethionine:tRNA ribosyltransferase-isomerase from Burkholderia ambifaria (strain MC40-6).